The primary structure comprises 525 residues: Plant UBX domain-containing protein 13 (525 aa).

A UBA-like domain is found at 2-44 (ATPTQEAIDTFMTITGSSNAVAVRKLEEYRGNLNRAVNAYFTH). Disordered stretches follow at residues 67-96 (RTTD…PPFV), 150-172 (DDDN…SAEN), and 194-328 (METG…EEHD). A compositionally biased stretch (basic and acidic residues) spans 209–229 (AEREVLRSEGWKASSSEREAS). Over residues 254–274 (SEDDDDDDDDDPDYVEEEEEP) the composition is skewed to acidic residues. Serine 362 is modified (phosphoserine). Positions 380 to 436 (LASLEADRVKAEARRLEEEAARVEAIEEAKRKEEEARRKVEEEQELERQLVSKEASL) form a coiled coil. The span at 408-430 (AKRKEEEARRKVEEEQELERQLV) shows a compositional bias: basic and acidic residues. Residues 408–446 (AKRKEEEARRKVEEEQELERQLVSKEASLPQEPPAGEEN) are disordered. One can recognise a UBX domain in the interval 443-521 (GEENAITLQV…GLTSKQEALF (79 aa)).

The sequence is that of Plant UBX domain-containing protein 13 from Arabidopsis thaliana (Mouse-ear cress).